The primary structure comprises 282 residues: 4-diphosphocytidyl-2-C-methyl-D-erythritol kinase (282 aa).

Lysine 13 is an active-site residue. ATP is bound at residue 96–106; sequence PMGGGIGGGSS. Aspartate 138 is a catalytic residue.

The protein belongs to the GHMP kinase family. IspE subfamily.

The enzyme catalyses 4-CDP-2-C-methyl-D-erythritol + ATP = 4-CDP-2-C-methyl-D-erythritol 2-phosphate + ADP + H(+). The protein operates within isoprenoid biosynthesis; isopentenyl diphosphate biosynthesis via DXP pathway; isopentenyl diphosphate from 1-deoxy-D-xylulose 5-phosphate: step 3/6. In terms of biological role, catalyzes the phosphorylation of the position 2 hydroxy group of 4-diphosphocytidyl-2C-methyl-D-erythritol. The sequence is that of 4-diphosphocytidyl-2-C-methyl-D-erythritol kinase from Pseudomonas syringae pv. syringae (strain B728a).